Here is a 434-residue protein sequence, read N- to C-terminus: Methylenetetrahydrofolate--tRNA-(uracil-5-)-methyltransferase TrmFO (434 aa).

9–14 (GAGLAG) provides a ligand contact to FAD.

Belongs to the MnmG family. TrmFO subfamily. It depends on FAD as a cofactor.

Its subcellular location is the cytoplasm. The catalysed reaction is uridine(54) in tRNA + (6R)-5,10-methylene-5,6,7,8-tetrahydrofolate + NADH + H(+) = 5-methyluridine(54) in tRNA + (6S)-5,6,7,8-tetrahydrofolate + NAD(+). It carries out the reaction uridine(54) in tRNA + (6R)-5,10-methylene-5,6,7,8-tetrahydrofolate + NADPH + H(+) = 5-methyluridine(54) in tRNA + (6S)-5,6,7,8-tetrahydrofolate + NADP(+). Functionally, catalyzes the folate-dependent formation of 5-methyl-uridine at position 54 (M-5-U54) in all tRNAs. This Listeria monocytogenes serovar 1/2a (strain ATCC BAA-679 / EGD-e) protein is Methylenetetrahydrofolate--tRNA-(uracil-5-)-methyltransferase TrmFO.